We begin with the raw amino-acid sequence, 34 residues long: Photosystem II reaction center protein Psb30 (34 aa).

The chain crosses the membrane as a helical span at residues 6–26 (VIGQLVSTGLIGLLGPAVIIL).

It belongs to the Psb30/Ycf12 family. PSII is composed of 1 copy each of membrane proteins PsbA, PsbB, PsbC, PsbD, PsbE, PsbF, PsbH, PsbI, PsbJ, PsbK, PsbL, PsbM, PsbT, PsbX, PsbY, PsbZ, Psb30/Ycf12, peripheral proteins of the oxygen-evolving complex and a large number of cofactors. It forms dimeric complexes.

It is found in the plastid. The protein localises to the chloroplast thylakoid membrane. A core subunit of photosystem II (PSII), probably helps stabilize the reaction center. The polypeptide is Photosystem II reaction center protein Psb30 (Skeletonema costatum (Marine centric diatom)).